The primary structure comprises 118 residues: Vacuolar ATPase assembly integral membrane protein vma-21 (118 aa).

At 1–35 (MATRRIISQEKTLLEKDDRIGSSPAASEKSNITPA) the chain is on the cytoplasmic side. A helical transmembrane segment spans residues 36–56 (VPASVIIKLLAFTFAMIVIPI). The Lumenal segment spans residues 57 to 73 (SSYFLTVDRLFKGNSTY). A helical membrane pass occupies residues 74–94 (AGATAAIMANVVLIGYIIVAM). Residues 95-118 (AEDQSDQENEKKGGGGKGEGKKDL) are Cytoplasmic-facing. The interval 98–118 (QSDQENEKKGGGGKGEGKKDL) is disordered. Residues 102 to 118 (ENEKKGGGGKGEGKKDL) are compositionally biased toward basic and acidic residues. Positions 115 to 118 (KKDL) match the Prevents secretion from ER motif.

This sequence belongs to the VMA21 family.

The protein localises to the endoplasmic reticulum membrane. Its subcellular location is the endoplasmic reticulum-Golgi intermediate compartment membrane. It is found in the cytoplasmic vesicle. It localises to the COPII-coated vesicle membrane. In terms of biological role, required for the assembly of the V0 complex of the vacuolar ATPase (V-ATPase) in the endoplasmic reticulum. This Neurospora crassa (strain ATCC 24698 / 74-OR23-1A / CBS 708.71 / DSM 1257 / FGSC 987) protein is Vacuolar ATPase assembly integral membrane protein vma-21 (vma-21).